The primary structure comprises 399 residues: STOREKEEPER protein (399 aa).

Disordered regions lie at residues 1-160 (MAPK…RSLW) and 250-301 (GISN…EEQQ). Acidic residues predominate over residues 20-54 (EEQELVEESQEEEEQQSREEEGEEESGEETEEDEE). Over residues 69–79 (KLVQTPQKPQF) the composition is skewed to polar residues. Composition is skewed to low complexity over residues 80-100 (SSESGSENGSGSDSEAESGNS) and 116-125 (AAKAATPSKP). Composition is skewed to basic and acidic residues over residues 143–152 (KIAEEEEKKS) and 270–299 (KTVEVKKSSEPKKSAKVSKPKDDEKQKEEE).

This sequence belongs to the GeBP family. Expressed in tubers and in leaves treated with sucrose.

The protein resides in the nucleus. Its function is as follows. May act as a transcriptional regulator. Binds specifically to the B-box motif, a promoter element that is required for the tuber-specific and sucrose inducible expression of the patatin gene. This Solanum tuberosum (Potato) protein is STOREKEEPER protein.